The primary structure comprises 242 residues: Biosynthetic peptidoglycan transglycosylase (242 aa).

Residues 19–39 traverse the membrane as a helical segment; it reads ILAALAVFWGGGIALFSVVPV.

This sequence belongs to the glycosyltransferase 51 family.

Its subcellular location is the cell inner membrane. The catalysed reaction is [GlcNAc-(1-&gt;4)-Mur2Ac(oyl-L-Ala-gamma-D-Glu-L-Lys-D-Ala-D-Ala)](n)-di-trans,octa-cis-undecaprenyl diphosphate + beta-D-GlcNAc-(1-&gt;4)-Mur2Ac(oyl-L-Ala-gamma-D-Glu-L-Lys-D-Ala-D-Ala)-di-trans,octa-cis-undecaprenyl diphosphate = [GlcNAc-(1-&gt;4)-Mur2Ac(oyl-L-Ala-gamma-D-Glu-L-Lys-D-Ala-D-Ala)](n+1)-di-trans,octa-cis-undecaprenyl diphosphate + di-trans,octa-cis-undecaprenyl diphosphate + H(+). It functions in the pathway cell wall biogenesis; peptidoglycan biosynthesis. Functionally, peptidoglycan polymerase that catalyzes glycan chain elongation from lipid-linked precursors. The protein is Biosynthetic peptidoglycan transglycosylase of Salmonella paratyphi B (strain ATCC BAA-1250 / SPB7).